We begin with the raw amino-acid sequence, 366 residues long: tRNA N6-adenosine threonylcarbamoyltransferase (366 aa).

Residues H119 and H123 each coordinate Fe cation. Substrate-binding positions include 142 to 146 (LVSGG), D175, G188, D192, and N281. D309 is a Fe cation binding site.

This sequence belongs to the KAE1 / TsaD family. It depends on Fe(2+) as a cofactor.

The protein localises to the cytoplasm. It catalyses the reaction L-threonylcarbamoyladenylate + adenosine(37) in tRNA = N(6)-L-threonylcarbamoyladenosine(37) in tRNA + AMP + H(+). Required for the formation of a threonylcarbamoyl group on adenosine at position 37 (t(6)A37) in tRNAs that read codons beginning with adenine. Is involved in the transfer of the threonylcarbamoyl moiety of threonylcarbamoyl-AMP (TC-AMP) to the N6 group of A37, together with TsaE and TsaB. TsaD likely plays a direct catalytic role in this reaction. This chain is tRNA N6-adenosine threonylcarbamoyltransferase, found in Synechococcus sp. (strain JA-3-3Ab) (Cyanobacteria bacterium Yellowstone A-Prime).